Reading from the N-terminus, the 1114-residue chain is Lysylphosphatidylglycerol biosynthesis bifunctional protein LysX (1114 aa).

The span at 1 to 11 (MSASTETHHAS) shows a compositional bias: basic and acidic residues. Residues 1 to 28 (MSASTETHHASEAAVPTAPRPRPALGSK) form a disordered region. Residues 1-618 (MSASTETHHA…GLHSDGSAPG (618 aa)) form a phosphatidylglycerol lysyltransferase region. A run of 6 helical transmembrane segments spans residues 38-58 (IAGLILGVFSVLVFLWSISPV), 77-97 (APDTSLSWALVVALLAAALAS), 101-121 (IAWWLLTIYLVLILITNVIVS), 126-146 (NVNAMVAAVVQVVLIGILVAA), 164-184 (GVLIVGLAIGTLVGWGLVELF), and 219-239 (FVNTLLGLFGAMALLAAVITL). The lysine--tRNA ligase stretch occupies residues 619-1114 (EGLAPTATGP…LAFPLAKPRQ (496 aa)). Residues 674 to 751 (VRIAGRLLRI…LSLLANEWRM (78 aa)) constitute a DNA-binding region (OB). The Mg(2+) site is built by D1025 and E1032.

It in the N-terminal section; belongs to the LPG synthetase family. The protein in the C-terminal section; belongs to the class-II aminoacyl-tRNA synthetase family. Requires Mg(2+) as cofactor.

It is found in the cell membrane. It catalyses the reaction tRNA(Lys) + L-lysine + ATP = L-lysyl-tRNA(Lys) + AMP + diphosphate. The catalysed reaction is L-lysyl-tRNA(Lys) + a 1,2-diacyl-sn-glycero-3-phospho-(1'-sn-glycerol) = a 1,2-diacyl-sn-glycero-3-phospho-1'-(3'-O-L-lysyl)-sn-glycerol + tRNA(Lys). Its function is as follows. Catalyzes the production of L-lysyl-tRNA(Lys)transfer and the transfer of a lysyl group from L-lysyl-tRNA(Lys) to membrane-bound phosphatidylglycerol (PG), which produces lysylphosphatidylglycerol (LPG), one of the components of the bacterial membrane with a positive net charge. LPG synthesis contributes to the resistance to cationic antimicrobial peptides (CAMPs) and likely protects M.tuberculosis against the CAMPs produced by competiting microorganisms (bacteriocins). In fact, the modification of anionic phosphatidylglycerol with positively charged L-lysine results in repulsion of the peptides. The polypeptide is Lysylphosphatidylglycerol biosynthesis bifunctional protein LysX (lysX) (Rhodococcus opacus (strain B4)).